Reading from the N-terminus, the 811-residue chain is Actin filament-associated protein 1-like 2 (811 aa).

Disordered stretches follow at residues 67–110 and 132–168; these read KEAQ…PPPK and EPYNASFNDDGEAVSSSYESYDEDESNKSKSAMQQHQ. The 97-residue stretch at 181–277 folds into the PH 1 domain; sequence DAMICAFLWR…WLKVIQDISG (97 aa). Positions 294-326 are disordered; sequence QRQIHPKAEGTDRHSGASESGSSTDGHPETPEI. Basic and acidic residues predominate over residues 299–309; it reads PKAEGTDRHSG. Residues 359-453 enclose the PH 2 domain; it reads ALETSNYLNV…WLGLLLLESG (95 aa). Disordered regions lie at residues 500-532 and 558-631; these read RGQRYQQDDLYDDVDMSDIQGDEPKSEEKGEAE and LGSP…KERV. Basic and acidic residues-rich tracts occupy residues 521–532, 566–577, and 622–631; these read DEPKSEEKGEAE, VSGKKDNEESER, and RLEKSNKERV. Residues 642 to 737 are a coiled coil; that stretch reads LLGKNRTEAE…KENLRKAELG (96 aa).

As to quaternary structure, interacts with src.

The protein localises to the cytoplasm. Functionally, may play a role in a signaling cascade by enhancing the kinase activity of src. Contributes to src-regulated transcription activation. This chain is Actin filament-associated protein 1-like 2 (afap1l2), found in Xenopus laevis (African clawed frog).